We begin with the raw amino-acid sequence, 493 residues long: MALFGALFLALLAGAHAEFPGCKIRVTSKALELVKQEGLRFLEQELETITIPDLRGKEGHFYYNISEVKVTELQLTSSELDFQPQQELMLQITNASLGLRFRRQLLYWFFYDGGYINASAEGVSIRTGLELSRDPAGRMKVSNVSCQASVSRMHAAFGGTFKKVYDFLSTFITSGMRFLLNQQICPVLYHAGTVLLNSLLDTVPVRSSVDELVGIDYSLMKDPVASTSNLDMDFRGAFFPLTERNWSLPNRAVEPQLQEEERMVYVAFSEFFFDSAMESYFRAGALQLLLVGDKVPHDLDMLLRATYFGSIVLLSPAVIDSPLKLELRVLAPPRCTIKPSGTTISVTASVTIALVPPDQPEVQLSSMTMDARLSAKMALRGKALRTQLDLRRFRIYSNHSALESLALIPLQAPLKTMLQIGVMPMLNERTWRGVQIPLPEGINFVHEVVTNHAGFLTIGADLHFAKGLREVIEKNRPADVRASTAPTPSTAAV.

The first 17 residues, 1–17 (MALFGALFLALLAGAHA), serve as a signal peptide directing secretion. Asparagine 64 carries an N-linked (GlcNAc...) (complex) asparagine glycan. A glycan (N-linked (GlcNAc...) asparagine) is linked at asparagine 94. A glycan (N-linked (GlcNAc...) (complex) asparagine) is linked at asparagine 117. An N-linked (GlcNAc...) asparagine glycan is attached at asparagine 143. Cysteine 146 and cysteine 185 are disulfide-bonded. A glycan (N-linked (GlcNAc...) (complex) asparagine) is linked at asparagine 245. An N-linked (GlcNAc...) asparagine glycan is attached at asparagine 398.

It belongs to the BPI/LBP/Plunc superfamily. BPI/LBP family. In terms of processing, glycosylation is necessary for secretion and its phospholipid transfer activity. Widely expressed. Highest level of expression in the ovary, thymus and placenta, with moderate levels found in the pancreas, small intestine, testis, lung and prostrate. Low level expression in the kidney, liver and spleen, with very low levels found in the heart, colon, skeletal muscle, leukocytes and brain. Expressed in the cortical neurons.

The protein resides in the secreted. Its subcellular location is the nucleus. It catalyses the reaction a 1,2-diacyl-sn-glycero-3-phosphocholine(in) = a 1,2-diacyl-sn-glycero-3-phosphocholine(out). The enzyme catalyses a 1,2-diacyl-sn-glycero-3-phosphoethanolamine(in) = a 1,2-diacyl-sn-glycero-3-phosphoethanolamine(out). The catalysed reaction is a 1,2-diacyl-sn-glycerol(in) = a 1,2-diacyl-sn-glycerol(out). It carries out the reaction a 1,2-diacyl-sn-glycero-3-phosphate(in) = a 1,2-diacyl-sn-glycero-3-phosphate(out). It catalyses the reaction a sphingomyelin(in) = a sphingomyelin(out). The enzyme catalyses a 1,2-diacyl-sn-glycero-3-phospho-(1'-sn-glycerol)(in) = a 1,2-diacyl-sn-glycero-3-phospho-(1'-sn-glycerol)(out). The catalysed reaction is a 1,2-diacyl-sn-glycero-3-phospho-(1D-myo-inositol)(in) = a 1,2-diacyl-sn-glycero-3-phospho-(1D-myo-inositol)(out). It carries out the reaction 1-hexadecanoyl-2-(5Z,8Z,11Z,14Z-eicosatetraenoyl)-sn-glycero-3-phosphoethanolamine(in) = 1-hexadecanoyl-2-(5Z,8Z,11Z,14Z-eicosatetraenoyl)-sn-glycero-3-phosphoethanolamine(out). It catalyses the reaction N-(hexadecanoyl)-sphing-4-enine-1-phosphocholine(in) = N-(hexadecanoyl)-sphing-4-enine-1-phosphocholine(out). The enzyme catalyses 1,2-dihexadecanoyl-sn-glycero-3-phosphocholine(in) = 1,2-dihexadecanoyl-sn-glycero-3-phosphocholine(out). Its function is as follows. Mediates the transfer of phospholipids and free cholesterol from triglyceride-rich lipoproteins (low density lipoproteins or LDL and very low density lipoproteins or VLDL) into high-density lipoproteins (HDL) as well as the exchange of phospholipids between triglyceride-rich lipoproteins themselves. Facilitates the transfer of a spectrum of different lipid molecules, including diacylglycerol, phosphatidic acid, sphingomyelin, phosphatidylcholine, phosphatidylinositol, phosphatidylglycerol, cerebroside and phosphatidyl ethanolamine. Plays an important role in HDL remodeling which involves modulating the size and composition of HDL. Also plays a key role in the uptake of cholesterol from peripheral cells and tissues that is subsequently transported to the liver for degradation and excretion. Two distinct forms of PLTP exist in plasma: an active form that can transfer phosphatidylcholine from phospholipid vesicles to HDL, and an inactive form that lacks this capability. The protein is Phospholipid transfer protein (PLTP) of Homo sapiens (Human).